The chain runs to 556 residues: Serine beta-lactamase-like protein LACTB, mitochondrial (556 aa).

The N-terminal 117 residues, 1–117 (MYRLLSAVMA…RAIDSSRDLL (117 aa)), are a transit peptide targeting the mitochondrion. S166 acts as the Acyl-ester intermediate in catalysis. A compositionally biased stretch (basic and acidic residues) spans 249–282 (ESDQEKELKEKGGKSNEKNDFAKAKVEQDNETKG). The segment at 249–290 (ESDQEKELKEKGGKSNEKNDFAKAKVEQDNETKGRNSKPCKK) is disordered. N6-succinyllysine occurs at positions 290 and 291. 2 positions are modified to N6-acetyllysine: K304 and K349.

It belongs to the peptidase S12 family.

The protein localises to the mitochondrion. In terms of biological role, mitochondrial serine protease that acts as a regulator of mitochondrial lipid metabolism. Acts by decreasing protein levels of PISD, a mitochondrial enzyme that converts phosphatidylserine (PtdSer) to phosphatidylethanolamine (PtdEtn), thereby affecting mitochondrial lipid metabolism. It is unclear whether it acts directly by mediating proteolysis of PISD or by mediating proteolysis of another lipid metabolism protein. The chain is Serine beta-lactamase-like protein LACTB, mitochondrial from Bos taurus (Bovine).